Reading from the N-terminus, the 488-residue chain is MAAAATATAGTKGVVRQVIGPVLDVEFPAGKLPKILNALRIDGKNPSGQHIAITAEVQQLLGDHRVRAVAMSSTDGLVRGMEALDTGSAISVPVGEATLGRIFNVLGEPVDEQGPVTTDATAPIHRPAPKLTELETKPTVFETGIKVIDLLAPYRQGGKVGLFGGAGVGKTVLIQELINNIAKEHGGVSVFGGVGERTREGNDLYEEFKESGVINSDDLSKSKVALCFGQMNEPPGARMRVGLSALTMAEHFRDVNKQDVLLFIDNIFRFVQAGSEVSALLGRMPSAVGYQPTLGTDVGALQERITSTLEGSITSIQAVYVPADDLTDPAPATTFAHLDATTVLARALAAKGIYPAVDPLDSTSTMLQPSVVGDEHYRTARSVQATLQRYKELQDIIAILGLDELSEDDRRTVDRARKIEKFLSQPFFVAEIFTGMSGKYVKLEETIAGFNMILAGELDHLPEQAFYLVGNIDEVKAKAEKIASEAKG.

ATP is bound at residue 164 to 171 (GGAGVGKT).

Belongs to the ATPase alpha/beta chains family. F-type ATPases have 2 components, CF(1) - the catalytic core - and CF(0) - the membrane proton channel. CF(1) has five subunits: alpha(3), beta(3), gamma(1), delta(1), epsilon(1). CF(0) has four main subunits: a(1), b(1), b'(1) and c(9-12).

The protein localises to the cellular thylakoid membrane. The catalysed reaction is ATP + H2O + 4 H(+)(in) = ADP + phosphate + 5 H(+)(out). Produces ATP from ADP in the presence of a proton gradient across the membrane. The catalytic sites are hosted primarily by the beta subunits. This Prochlorococcus marinus (strain MIT 9303) protein is ATP synthase subunit beta.